The chain runs to 2359 residues: Low-reducing polyketide synthase drtA (2359 aa).

The region spanning 17-444 (LPPIAVVSFA…GANAHVIVEE (428 aa)) is the Ketosynthase family 3 (KS3) domain. Catalysis depends on for beta-ketoacyl synthase activity residues Cys190, His327, and His367. A malonyl-CoA:ACP transacylase (MAT) domain region spans residues 556–868 (VFTGQGSQWP…QYLAALDRGK (313 aa)). The active-site For malonyltransferase activity is Ser648. An N-terminal hotdog fold region spans residues 940–1077 (HELLGRKILG…GRISVRQVAA (138 aa)). Positions 940 to 1245 (HELLGRKILG…FKGLRFSELN (306 aa)) are dehydratase (DH) domain. In terms of domain architecture, PKS/mFAS DH spans 940-1250 (HELLGRKILG…FSELNMGDGV (311 aa)). His972 (proton acceptor; for dehydratase activity) is an active-site residue. Positions 1089 to 1250 (AYSESAEHWY…FSELNMGDGV (162 aa)) are C-terminal hotdog fold. Asp1153 acts as the Proton donor; for dehydratase activity in catalysis. The segment at 1659–1970 (GSFDSLELYE…TGRHVGKVVV (312 aa)) is enoyl reductase (ER) domain. Residues 1995–2172 (SYLITGGLHG…LSLDIGAVQD (178 aa)) form a ketoreductase (KR) domain region. Residues 2280 to 2356 (ALTEAAIELF…ALCSKLITRL (77 aa)) enclose the Carrier domain. An O-(pantetheine 4'-phosphoryl)serine modification is found at Ser2316.

It functions in the pathway secondary metabolite biosynthesis; terpenoid biosynthesis. Low-reducing polyketide synthase; part of the gene cluster that mediates the biosynthesis of various drimane-type sesquiterpene esters, compounds that exhibit diverse biological activities and are widely present in eukaryotes. The pathway begins with the synthesis of the backbone drimenol by the terpene cyclase drtB using farnesyl pyrophosphate (FPP) as substrate. The cytochrome P450 monooxygenase drtD is then responsible for the hydroxylations at C-6, C-9 and C-12, as well as the oxidation of hydroxyl groups at C-6 and C-11 to a ketone and an aldehyde, respectively. Then, the biosynthesis can go in two directions, either the hydroxylated drimenol is further hydroxylated at C-2 and C-3 by an enzyme(s) not associated with the drt cluster, or the FAD-binding oxidoreductase drtC further oxidizes C-11 or C-12 to form the butyrolactone ring. DrtB, drtD and drtC are solely responsible for the formation of the different drimane structures observed during drimane sesquiterpenes biosynthesis. The polyketide synthase drtA synthesizes different lengths (C6 and C8) of PKS chains, which are then oxidized to varying degrees by the short-chain dehydrogenase drtF. Finally, these PKS chains are transferred onto drimane sesquiterpenes by the acyltransferase drtE, forming the sesquiterpene esters. In addition to the different fatty acyl-CoA chains produced by drtA, drtE is also able to use cinnamoyl-CoA as a substrate. The chain is Low-reducing polyketide synthase drtA from Aspergillus calidoustus.